We begin with the raw amino-acid sequence, 246 residues long: MVLNLLHLGRIGYAQGLELQRQLVEARHSGRIGNTLLLLEHPPVLTLGRNSERKNVLASDEFLAYRGVEIHEVNRGGDVTYHGPGQLVGYPILDLRSFAESGERGRLGAVEYVRWVEEALIRTCADFGVQTQRVAGRTGVWTLPGGSVEEKKIAAIGVHISRGITSHGFALNVTTDLRDFDLIVPCGISDRKVTSLELEVIDEPALTMEKVIHSAARQFGRVFGHQVLWLESPGDLLPELATLTQS.

The region spanning 30 to 227 is the BPL/LPL catalytic domain; sequence GRIGNTLLLL…QFGRVFGHQV (198 aa). Substrate is bound by residues 75-82, 155-157, and 168-170; these read RGGDVTYH, AIG, and GFA. Cysteine 186 serves as the catalytic Acyl-thioester intermediate.

It belongs to the LipB family.

The protein resides in the cytoplasm. The catalysed reaction is octanoyl-[ACP] + L-lysyl-[protein] = N(6)-octanoyl-L-lysyl-[protein] + holo-[ACP] + H(+). It functions in the pathway protein modification; protein lipoylation via endogenous pathway; protein N(6)-(lipoyl)lysine from octanoyl-[acyl-carrier-protein]: step 1/2. Functionally, catalyzes the transfer of endogenously produced octanoic acid from octanoyl-acyl-carrier-protein onto the lipoyl domains of lipoate-dependent enzymes. Lipoyl-ACP can also act as a substrate although octanoyl-ACP is likely to be the physiological substrate. This chain is Octanoyltransferase, found in Acidobacterium capsulatum (strain ATCC 51196 / DSM 11244 / BCRC 80197 / JCM 7670 / NBRC 15755 / NCIMB 13165 / 161).